We begin with the raw amino-acid sequence, 422 residues long: Ena/VASP-like protein (422 aa).

The WH1 domain maps to 4–118 (FEEFSEQSIC…NAMLFALNIM (115 aa)). Positions 120–135 (SQEGGPSSQRQVQNGP) are enriched in polar residues. Disordered regions lie at residues 120–139 (SQEGGPSSQRQVQNGPSPDE) and 147–375 (VMEQ…PAGS). Ser-136 is subject to Phosphoserine. Residues 147–163 (VMEQHQQQRQESLERRT) are compositionally biased toward basic and acidic residues. The span at 175-186 (PSSAASAPVSCS) shows a compositional bias: low complexity. Residues 187 to 212 (GPPPPPPPPVPPPPTGATPPPPPPLP) are compositionally biased toward pro residues. The segment at 228–248 (GLAAAIAGAKLRRVQRPEDAS) is EVH2 block A. Residues 228–419 (GLAAAIAGAK…DAIRQELSGI (192 aa)) form an EVH2 region. Positions 237–240 (KLRR) match the KLKR motif. Positions 248–259 (SGGSSPSGTSKS) are enriched in low complexity. Residues Ser-252 and Ser-265 each carry the phosphoserine modification. Positions 271–288 (GGLMEEMNKLLAKRRKAA) are EVH2 block B. A compositionally biased stretch (polar residues) spans 305 to 326 (EDPSTSPSPGTRAASQPPNSSE). Phosphoserine is present on residues Ser-310, Ser-312, Ser-335, Ser-337, Ser-347, Ser-355, Ser-360, and Ser-375. Positions 327-337 (AGRKPWERSNS) are enriched in basic and acidic residues. A required for interaction with ZDHHC17 region spans residues 348-368 (RTPSVAKSPEAKSPLQSQPHS). An EVH2 block C region spans residues 385–419 (DLDRMKQEILEEVVRELHKVKDEIIDAIRQELSGI). A coiled-coil region spans residues 388–414 (RMKQEILEEVVRELHKVKDEIIDAIRQ).

It belongs to the Ena/VASP family. Homotetramer. Binds to the SH3 domains of ABL1, LYN and SRC. Also binds to profilin, with preference for isoform IIa of PFN2, and the WW domain of APBB1/FE65. Binds to SEMA6A. Interacts, via the Pro-rich region, with the C-terminal SH3 domain of DNMBP. Interacts with RAPH1. Binds, via the EVH1 domain, the Pro-rich domain of Listeria monocytogenes actA. Binds, via the EVH1 domain, the Pro-rich domain of ZYX. Interacts with FYB1. Interacts with ZDHHC17. In terms of processing, phosphorylated by PKA; phosphorylation abolishes binding to SH3 domains of ABL and SRC.

Its subcellular location is the cytoplasm. It is found in the cytoskeleton. It localises to the stress fiber. The protein localises to the cell projection. The protein resides in the lamellipodium. Its function is as follows. Ena/VASP proteins are actin-associated proteins involved in a range of processes dependent on cytoskeleton remodeling and cell polarity such as axon guidance and lamellipodial and filopodial dynamics in migrating cells. EVL enhances actin nucleation and polymerization. The sequence is that of Ena/VASP-like protein (EVL) from Pongo abelii (Sumatran orangutan).